Consider the following 247-residue polypeptide: RNA-free ribonuclease P (247 aa).

It belongs to the HARP family.

The enzyme catalyses Endonucleolytic cleavage of RNA, removing 5'-extranucleotides from tRNA precursor.. RNA-free RNase P that catalyzes the removal of the 5'-leader sequence from pre-tRNA to produce the mature 5'-terminus. The sequence is that of RNA-free ribonuclease P from Methanosarcina mazei (strain ATCC BAA-159 / DSM 3647 / Goe1 / Go1 / JCM 11833 / OCM 88) (Methanosarcina frisia).